Consider the following 213-residue polypeptide: 3,4-dihydroxy-2-butanone 4-phosphate synthase (213 aa).

Residues arginine 27–glutamate 28, aspartate 32, arginine 140–threonine 144, and glutamate 164 each bind D-ribulose 5-phosphate. Residue glutamate 28 coordinates Mg(2+). Mg(2+) is bound at residue histidine 143.

The protein belongs to the DHBP synthase family. In terms of assembly, homodimer. Mg(2+) is required as a cofactor. It depends on Mn(2+) as a cofactor.

It catalyses the reaction D-ribulose 5-phosphate = (2S)-2-hydroxy-3-oxobutyl phosphate + formate + H(+). Its pathway is cofactor biosynthesis; riboflavin biosynthesis; 2-hydroxy-3-oxobutyl phosphate from D-ribulose 5-phosphate: step 1/1. Catalyzes the conversion of D-ribulose 5-phosphate to formate and 3,4-dihydroxy-2-butanone 4-phosphate. The polypeptide is 3,4-dihydroxy-2-butanone 4-phosphate synthase (Agrobacterium fabrum (strain C58 / ATCC 33970) (Agrobacterium tumefaciens (strain C58))).